Consider the following 1763-residue polypeptide: Collagen alpha-2(IV) chain (1763 aa).

An N-terminal signal peptide occupies residues 1–26 (MSSRLRIPLWLLLPTTALVYFVTTVS). The segment at 27–42 (TQITCRDCTNRGCFCV) is 7S domain. The triple-helical region stretch occupies residues 43-1529 (GEKGSMGIPG…SGPPGPPGPS (1487 aa)). Disordered stretches follow at residues 51 to 529 (PGPQ…PGPK) and 550 to 1529 (AGYA…PGPS). Residues 72–81 (PGPKGQKGSQ) show a composition bias toward low complexity. Asparagine 126 is a glycosylation site (N-linked (GlcNAc...) asparagine). The span at 135–152 (PGLPGPPGMPGFPGPPGV) shows a compositional bias: pro residues. Residues 190 to 199 (FPGEKGDRGD) are compositionally biased toward basic and acidic residues. Residues 206–217 (RGPPGEAGPPGN) show a composition bias toward pro residues. A compositionally biased stretch (low complexity) spans 225–235 (PKGDPGEQGPR). A glycan (O-linked (Xyl...) (glycosaminoglycan) serine) is linked at alanine 249. The segment covering 326–335 (DGLPGVPGLP) has biased composition (low complexity). The segment covering 400 to 409 (GLPGGPGLPG) has biased composition (gly residues). Low complexity-rich tracts occupy residues 410-419 (LPGLEGLPGP) and 428-453 (IPGA…PGPR). Basic and acidic residues predominate over residues 466-481 (KDGRPGLDGLPGRKGE). Over residues 564–582 (LPGIPGATGAPGDDGLPGA) the composition is skewed to low complexity. A compositionally biased stretch (pro residues) spans 583–592 (PGRPGPPGPP). Low complexity-rich tracts occupy residues 699 to 714 (DAGL…AVGP) and 731 to 783 (KDGL…PGIP). Residues 810-832 (PGLPGPKGEPGPSTTGPPGPPGF) show a composition bias toward pro residues. 10 stretches are compositionally biased toward low complexity: residues 865 to 895 (EIGL…KEGP), 946 to 977 (FPGQ…PGQK), 1040 to 1051 (PGLPGQPGLRGP), 1077 to 1086 (LMGEKGLPGL), 1108 to 1146 (PGLK…QPGL), 1210 to 1231 (PGFP…PGPR), 1280 to 1296 (LPGL…PGLK), 1367 to 1386 (PAGL…PGFP), 1462 to 1480 (LPGL…FAGA), and 1499 to 1510 (PGLPGFPGIEGI). The span at 1511–1528 (PGPPGLPGPSGPPGPPGP) shows a compositional bias: pro residues. The 224-residue stretch at 1533–1756 (GFLLVKHSQT…SRCQVCIRSP (224 aa)) folds into the Collagen IV NC1 domain. Disulfide bonds link cysteine 1548-cysteine 1637, cysteine 1581-cysteine 1634, cysteine 1593-cysteine 1599, cysteine 1656-cysteine 1752, cysteine 1690-cysteine 1749, and cysteine 1702-cysteine 1709.

The protein belongs to the type IV collagen family. Trimers of two alpha 1(IV) and one alpha 2(IV) chain. Type IV collagen forms a mesh-like network linked through intermolecular interactions between 7S domains and between NC1 domains. In terms of processing, prolines at the third position of the tripeptide repeating unit (G-X-Y) are hydroxylated in some or all of the chains. Type IV collagens contain numerous cysteine residues which are involved in inter- and intramolecular disulfide bonding. 12 of these, located in the NC1 domain, are conserved in all known type IV collagens. Post-translationally, the trimeric structure of the NC1 domains is stabilized by covalent bonds between Lys and Met residues.

It localises to the secreted. It is found in the extracellular space. The protein localises to the extracellular matrix. Its subcellular location is the basement membrane. In terms of biological role, collagen type IV is specific for basement membranes. The protein is Collagen alpha-2(IV) chain of Ascaris suum (Pig roundworm).